A 220-amino-acid chain; its full sequence is Octanoyltransferase (220 aa).

The 182-residue stretch at 27 to 208 folds into the BPL/LPL catalytic domain; the sequence is PGTADEIWLC…QLARAHGHAV (182 aa). Substrate contacts are provided by residues 66 to 73, 139 to 141, and 152 to 154; these read RGGQVTYH, ALG, and GLA. The active-site Acyl-thioester intermediate is the Cys170.

This sequence belongs to the LipB family.

It is found in the cytoplasm. It carries out the reaction octanoyl-[ACP] + L-lysyl-[protein] = N(6)-octanoyl-L-lysyl-[protein] + holo-[ACP] + H(+). The protein operates within protein modification; protein lipoylation via endogenous pathway; protein N(6)-(lipoyl)lysine from octanoyl-[acyl-carrier-protein]: step 1/2. In terms of biological role, catalyzes the transfer of endogenously produced octanoic acid from octanoyl-acyl-carrier-protein onto the lipoyl domains of lipoate-dependent enzymes. Lipoyl-ACP can also act as a substrate although octanoyl-ACP is likely to be the physiological substrate. This Bordetella parapertussis (strain 12822 / ATCC BAA-587 / NCTC 13253) protein is Octanoyltransferase.